A 181-amino-acid chain; its full sequence is uncharacterized protein (181 aa).

The segment at 25–47 is disordered; the sequence is ELANEVSAGDEEPYDDDIWESED. Over residues 32-47 the composition is skewed to acidic residues; the sequence is AGDEEPYDDDIWESED. Residues 149 to 169 traverse the membrane as a helical segment; it reads ILTLILLSCGLLMLFIGYPIL.

It localises to the cytoplasm. Its subcellular location is the membrane. This is an uncharacterized protein from Schizosaccharomyces pombe (strain 972 / ATCC 24843) (Fission yeast).